A 207-amino-acid polypeptide reads, in one-letter code: Ribosomal RNA small subunit methyltransferase G (207 aa).

Residues glycine 76, glutamine 81, valine 127–glutamate 128, and arginine 141 contribute to the S-adenosyl-L-methionine site.

The protein belongs to the methyltransferase superfamily. RNA methyltransferase RsmG family.

It is found in the cytoplasm. It carries out the reaction guanosine(527) in 16S rRNA + S-adenosyl-L-methionine = N(7)-methylguanosine(527) in 16S rRNA + S-adenosyl-L-homocysteine. Its function is as follows. Specifically methylates the N7 position of guanine in position 527 of 16S rRNA. The protein is Ribosomal RNA small subunit methyltransferase G of Neisseria gonorrhoeae (strain ATCC 700825 / FA 1090).